We begin with the raw amino-acid sequence, 221 residues long: Uridylate kinase (221 aa).

Lys-7 to Lys-11 provides a ligand contact to ATP. UMP is bound at residue Gly-43. Residues Gly-44 and Arg-48 each coordinate ATP. Residues Asp-62 and Leu-109–Thr-115 contribute to the UMP site. ATP is bound by residues Thr-135 and Tyr-141.

Belongs to the UMP kinase family. As to quaternary structure, homohexamer.

It localises to the cytoplasm. The catalysed reaction is UMP + ATP = UDP + ADP. It functions in the pathway pyrimidine metabolism; CTP biosynthesis via de novo pathway; UDP from UMP (UMPK route): step 1/1. Its activity is regulated as follows. Inhibited by UTP. Functionally, catalyzes the reversible phosphorylation of UMP to UDP. In Ignicoccus hospitalis (strain KIN4/I / DSM 18386 / JCM 14125), this protein is Uridylate kinase.